The sequence spans 63 residues: MRCLPVFVILLLLIASTPSDTVPLKTKDDMPQASFHGNARRTLQMLSKKQCCWYFDISCCITV.

Residues 1 to 19 (MRCLPVFVILLLLIASTPS) form the signal peptide. Positions 20–47 (DTVPLKTKDDMPQASFHGNARRTLQMLS) are excised as a propeptide.

It belongs to the conotoxin T superfamily. In terms of processing, contains 2 disulfide bonds that can be either 'C1-C3, C2-C4' or 'C1-C4, C2-C3', since these disulfide connectivities have been observed for conotoxins with cysteine framework V (for examples, see AC P0DQQ7 and AC P81755). Expressed by the venom duct.

The protein resides in the secreted. In Conus textile (Cloth-of-gold cone), this protein is Conotoxin Tx-D0111.